The sequence spans 226 residues: UPF0758 protein gbs1168 (226 aa).

In terms of domain architecture, MPN spans 103–225 (QILSSEQLAR…YYSFREEADI (123 aa)). Positions 174, 176, and 187 each coordinate Zn(2+). A JAMM motif motif is present at residues 174-187 (HNHPSGSPNPSESD).

The protein belongs to the UPF0758 family.

The sequence is that of UPF0758 protein gbs1168 from Streptococcus agalactiae serotype III (strain NEM316).